A 290-amino-acid chain; its full sequence is Glycine-N-acyltransferase-like protein 3 (290 aa).

The enzyme catalyses an acyl-CoA + glycine = an N-acylglycine + CoA + H(+). It catalyses the reaction (9Z)-octadecenoyl-CoA + glycine = N-(9Z-octadecenoyl)glycine + CoA + H(+). It carries out the reaction hexadecanoyl-CoA + glycine = N-hexadecanoylglycine + CoA + H(+). It functions in the pathway lipid metabolism. Functionally, catalyzes the conjugation of long-chain fatty acyl-CoA thioester and glycine to produce long-chain N-(fatty acyl)glycine, an intermediate in the primary fatty acid amide biosynthetic pathway. This Mus musculus (Mouse) protein is Glycine-N-acyltransferase-like protein 3.